We begin with the raw amino-acid sequence, 545 residues long: Chaperonin GroEL 3 (545 aa).

ATP-binding positions include 30–33 (TLGP), K51, 87–91 (DGTTT), G415, and D496.

The protein belongs to the chaperonin (HSP60) family. As to quaternary structure, forms a cylinder of 14 subunits composed of two heptameric rings stacked back-to-back. Interacts with the co-chaperonin GroES.

Its subcellular location is the cytoplasm. The enzyme catalyses ATP + H2O + a folded polypeptide = ADP + phosphate + an unfolded polypeptide.. Together with its co-chaperonin GroES, plays an essential role in assisting protein folding. The GroEL-GroES system forms a nano-cage that allows encapsulation of the non-native substrate proteins and provides a physical environment optimized to promote and accelerate protein folding. This chain is Chaperonin GroEL 3, found in Nitrobacter hamburgensis (strain DSM 10229 / NCIMB 13809 / X14).